Here is a 1181-residue protein sequence, read N- to C-terminus: Lysine-specific demethylase hairless (1181 aa).

Positions 311 to 323 are enriched in pro residues; the sequence is TPRCPSPGPPTPP. Disordered stretches follow at residues 311-378, 413-472, and 509-543; these read TPRC…HTKL, AGSP…DGRI, and SHSQKSHKLPLEEKPLEEDSCATSEEGGGSSPEAS. Residues 347–357 are compositionally biased toward low complexity; that stretch reads SPEGSSSGPGE. Polar residues predominate over residues 447-461; the sequence is TPETSTGSKAEAQQQ. The segment covering 462 to 472 has biased composition (basic and acidic residues); the sequence is EEQRGPRDGRI. Residues 560–564 carry the LXXLL motif 1 motif; that stretch reads LCRLL. Residues 594–619 form a C6-type zinc finger; that stretch reads CSRCHHGLFNTHWRCSHCSHRLCVAC. The interval 696 to 745 is disordered; sequence GDGGQQKEPTEKTPPAPQLSCNGDSNRTKDIKEETPDSTESPAEDRAGRS. Residues 721–730 are compositionally biased toward basic and acidic residues; sequence NRTKDIKEET. The LXXLL motif 2 signature appears at 752 to 756; it reads LCELL. The 212-residue stretch at 938–1149 folds into the JmjC domain; the sequence is DESRVENLAS…LSAQLCHQGA (212 aa). 3 residues coordinate Fe cation: cysteine 999, glutamate 1001, and histidine 1117.

Fe(2+) serves as cofactor.

It is found in the nucleus. It carries out the reaction N(6),N(6)-dimethyl-L-lysyl(9)-[histone H3] + 2 2-oxoglutarate + 2 O2 = L-lysyl(9)-[histone H3] + 2 formaldehyde + 2 succinate + 2 CO2. Its function is as follows. Histone demethylase that specifically demethylates both mono- and dimethylated 'Lys-9' of histone H3. May act as a transcription regulator controlling hair biology (via targeting of collagens), neural activity, and cell cycle. In Rattus norvegicus (Rat), this protein is Lysine-specific demethylase hairless (Hr).